The sequence spans 285 residues: Elongation factor Ts (285 aa).

The tract at residues 75 to 78 (TDFV) is involved in Mg(2+) ion dislocation from EF-Tu.

The protein belongs to the EF-Ts family.

The protein localises to the cytoplasm. Functionally, associates with the EF-Tu.GDP complex and induces the exchange of GDP to GTP. It remains bound to the aminoacyl-tRNA.EF-Tu.GTP complex up to the GTP hydrolysis stage on the ribosome. The protein is Elongation factor Ts of Alcanivorax borkumensis (strain ATCC 700651 / DSM 11573 / NCIMB 13689 / SK2).